The primary structure comprises 121 residues: uncharacterized protein (121 aa).

77–84 lines the ATP pocket; the sequence is AALSFGKT.

This is an uncharacterized protein from Saccharomyces cerevisiae (strain ATCC 204508 / S288c) (Baker's yeast).